The sequence spans 303 residues: Glycine--tRNA ligase alpha subunit (303 aa).

It belongs to the class-II aminoacyl-tRNA synthetase family. Tetramer of two alpha and two beta subunits.

The protein localises to the cytoplasm. The enzyme catalyses tRNA(Gly) + glycine + ATP = glycyl-tRNA(Gly) + AMP + diphosphate. The polypeptide is Glycine--tRNA ligase alpha subunit (Salmonella agona (strain SL483)).